We begin with the raw amino-acid sequence, 145 residues long: Cell division protein SepF (145 aa).

It belongs to the SepF family. As to quaternary structure, homodimer. Interacts with FtsZ.

It localises to the cytoplasm. Functionally, cell division protein that is part of the divisome complex and is recruited early to the Z-ring. Probably stimulates Z-ring formation, perhaps through the cross-linking of FtsZ protofilaments. Its function overlaps with FtsA. In Lactobacillus helveticus (strain DPC 4571), this protein is Cell division protein SepF.